The following is a 710-amino-acid chain: Prolyl endopeptidase (710 aa).

Methionine 1 bears the N-acetylmethionine mark. Lysine 157 is subject to N6-acetyllysine. Residues serine 554, aspartate 641, and histidine 680 each act as charge relay system in the active site.

It belongs to the peptidase S9A family. In terms of assembly, monomer. Post-translationally, the N-terminus is blocked.

Its subcellular location is the cytoplasm. It catalyses the reaction Hydrolysis of Pro-|-Xaa &gt;&gt; Ala-|-Xaa in oligopeptides.. Its function is as follows. Cleaves peptide bonds on the C-terminal side of prolyl residues within peptides that are up to approximately 30 amino acids long. This chain is Prolyl endopeptidase (PREP), found in Homo sapiens (Human).